We begin with the raw amino-acid sequence, 362 residues long: Ribosomal RNA large subunit methyltransferase M (362 aa).

Residues Ser-194, 227 to 230 (CPGG), Asp-246, Asp-266, and Asp-284 each bind S-adenosyl-L-methionine. Lys-313 functions as the Proton acceptor in the catalytic mechanism.

This sequence belongs to the class I-like SAM-binding methyltransferase superfamily. RNA methyltransferase RlmE family. RlmM subfamily. In terms of assembly, monomer.

It is found in the cytoplasm. The enzyme catalyses cytidine(2498) in 23S rRNA + S-adenosyl-L-methionine = 2'-O-methylcytidine(2498) in 23S rRNA + S-adenosyl-L-homocysteine + H(+). Its function is as follows. Catalyzes the 2'-O-methylation at nucleotide C2498 in 23S rRNA. The polypeptide is Ribosomal RNA large subunit methyltransferase M (Aggregatibacter aphrophilus (strain NJ8700) (Haemophilus aphrophilus)).